Consider the following 294-residue polypeptide: 4-hydroxy-tetrahydrodipicolinate synthase (294 aa).

Thr47 lines the pyruvate pocket. Tyr135 functions as the Proton donor/acceptor in the catalytic mechanism. The active-site Schiff-base intermediate with substrate is the Lys163. Ile206 serves as a coordination point for pyruvate.

The protein belongs to the DapA family. Homodimer.

The protein localises to the cytoplasm. The enzyme catalyses L-aspartate 4-semialdehyde + pyruvate = (2S,4S)-4-hydroxy-2,3,4,5-tetrahydrodipicolinate + H2O + H(+). Its pathway is amino-acid biosynthesis; L-lysine biosynthesis via DAP pathway; (S)-tetrahydrodipicolinate from L-aspartate: step 3/4. Functionally, catalyzes the condensation of (S)-aspartate-beta-semialdehyde [(S)-ASA] and pyruvate to 4-hydroxy-tetrahydrodipicolinate (HTPA). In Staphylococcus epidermidis (strain ATCC 35984 / DSM 28319 / BCRC 17069 / CCUG 31568 / BM 3577 / RP62A), this protein is 4-hydroxy-tetrahydrodipicolinate synthase.